The chain runs to 127 residues: MORF4 family-associated protein 1 (127 aa).

Residues 92 to 126 (RAAKRCEKAEEKAKEIAKMAEMLVELVRRIEKSES) adopt a coiled-coil conformation.

The protein belongs to the MORF4 family-associated protein family. In terms of assembly, found in a complex composed of MORF4L1, MRFAP1 and RB1. Interacts via its N-terminus with MORF4L1. Interacts with CSTB and MORF4L2.

The protein resides in the nucleus. The protein localises to the cytoplasm. It is found in the perinuclear region. This chain is MORF4 family-associated protein 1, found in Homo sapiens (Human).